The following is a 155-amino-acid chain: S-ribosylhomocysteine lyase (155 aa).

Residues His54, His58, and Cys122 each coordinate Fe cation.

This sequence belongs to the LuxS family. As to quaternary structure, homodimer. Fe cation is required as a cofactor.

The catalysed reaction is S-(5-deoxy-D-ribos-5-yl)-L-homocysteine = (S)-4,5-dihydroxypentane-2,3-dione + L-homocysteine. Its function is as follows. Involved in the synthesis of autoinducer 2 (AI-2) which is secreted by bacteria and is used to communicate both the cell density and the metabolic potential of the environment. The regulation of gene expression in response to changes in cell density is called quorum sensing. Catalyzes the transformation of S-ribosylhomocysteine (RHC) to homocysteine (HC) and 4,5-dihydroxy-2,3-pentadione (DPD). This is S-ribosylhomocysteine lyase from Deinococcus geothermalis (strain DSM 11300 / CIP 105573 / AG-3a).